We begin with the raw amino-acid sequence, 379 residues long: MIYLPDGVQDFLPEEYEFKRNIEDKFREVFKSFGYKEIMPPTFEYSENFSHLFDENSMYRFFDKKGNILALRPDVTAQIARIVSTKLEGRYPLKLCYVANVYRYEDTQVGKMREFTQAGVELIGTNHEESDAEVIALSIEALKSTGLKDFKIDIGHAEVFGSIVRNLNLGNEDVNLLRELLEQKNQSAIEDFIKQKEIKREEAKLLRELPLLFGGEEILEKLKKENFKETEGVLEYLDRVYKILEDFGMKEYISFDLGMVQNLNYYTGIIFRGFVKGLGYAICTGGRYDKLLKIYGKDLPATGFAISVERVMLALQRQSKGEWVKPRRVLVRYKEEERRRAYEKANVLRKEGNVVEMYTFKRCENIDLKSFDEVVDVGE.

This sequence belongs to the class-II aminoacyl-tRNA synthetase family. HisZ subfamily. As to quaternary structure, heteromultimer composed of HisG and HisZ subunits.

The protein localises to the cytoplasm. It functions in the pathway amino-acid biosynthesis; L-histidine biosynthesis; L-histidine from 5-phospho-alpha-D-ribose 1-diphosphate: step 1/9. In terms of biological role, required for the first step of histidine biosynthesis. May allow the feedback regulation of ATP phosphoribosyltransferase activity by histidine. This chain is ATP phosphoribosyltransferase regulatory subunit, found in Caldanaerobacter subterraneus subsp. tengcongensis (strain DSM 15242 / JCM 11007 / NBRC 100824 / MB4) (Thermoanaerobacter tengcongensis).